The following is a 79-amino-acid chain: Phosphoribosylformylglycinamidine synthase subunit PurS (79 aa).

The protein belongs to the PurS family. As to quaternary structure, homodimer. Part of the FGAM synthase complex composed of 1 PurL, 1 PurQ and 2 PurS subunits.

Its subcellular location is the cytoplasm. It carries out the reaction N(2)-formyl-N(1)-(5-phospho-beta-D-ribosyl)glycinamide + L-glutamine + ATP + H2O = 2-formamido-N(1)-(5-O-phospho-beta-D-ribosyl)acetamidine + L-glutamate + ADP + phosphate + H(+). It participates in purine metabolism; IMP biosynthesis via de novo pathway; 5-amino-1-(5-phospho-D-ribosyl)imidazole from N(2)-formyl-N(1)-(5-phospho-D-ribosyl)glycinamide: step 1/2. Part of the phosphoribosylformylglycinamidine synthase complex involved in the purines biosynthetic pathway. Catalyzes the ATP-dependent conversion of formylglycinamide ribonucleotide (FGAR) and glutamine to yield formylglycinamidine ribonucleotide (FGAM) and glutamate. The FGAM synthase complex is composed of three subunits. PurQ produces an ammonia molecule by converting glutamine to glutamate. PurL transfers the ammonia molecule to FGAR to form FGAM in an ATP-dependent manner. PurS interacts with PurQ and PurL and is thought to assist in the transfer of the ammonia molecule from PurQ to PurL. The protein is Phosphoribosylformylglycinamidine synthase subunit PurS of Mycobacterium leprae (strain TN).